The following is a 255-amino-acid chain: Snake venom serine protease HS112 (255 aa).

Residues 1–18 form the signal peptide; that stretch reads MVLIRVIANLLILQLSYA. Residues 19–24 constitute a propeptide that is removed on maturation; the sequence is QKSSEL. The region spanning 25 to 246 is the Peptidase S1 domain; sequence VIGGDECDIN…YLPWIQSIIA (222 aa). 6 disulfide bridges follow: C31/C162, C49/C65, C97/C253, C141/C207, C173/C186, and C197/C222. Active-site charge relay system residues include H64 and D109. N-linked (GlcNAc...) asparagine glycosylation occurs at N169. The active-site Charge relay system is the S201. N248 carries an N-linked (GlcNAc...) asparagine glycan.

It belongs to the peptidase S1 family. Snake venom subfamily. Monomer. Expressed by the venom gland.

It localises to the secreted. In terms of biological role, snake venom serine protease that may act in the hemostasis system of the prey. This is Snake venom serine protease HS112 from Bothrops jararaca (Jararaca).